The sequence spans 273 residues: Dermonecrotic toxin LspaSicTox-alphaIA1ii (273 aa).

Residue H5 is part of the active site. Mg(2+) contacts are provided by E25 and D27. Residue H41 is the Nucleophile of the active site. Disulfide bonds link C45–C51 and C47–C190. D85 is a Mg(2+) binding site.

It belongs to the arthropod phospholipase D family. Class II subfamily. It depends on Mg(2+) as a cofactor. As to expression, expressed by the venom gland.

Its subcellular location is the secreted. The catalysed reaction is an N-(acyl)-sphingosylphosphocholine = an N-(acyl)-sphingosyl-1,3-cyclic phosphate + choline. It carries out the reaction an N-(acyl)-sphingosylphosphoethanolamine = an N-(acyl)-sphingosyl-1,3-cyclic phosphate + ethanolamine. It catalyses the reaction a 1-acyl-sn-glycero-3-phosphocholine = a 1-acyl-sn-glycero-2,3-cyclic phosphate + choline. The enzyme catalyses a 1-acyl-sn-glycero-3-phosphoethanolamine = a 1-acyl-sn-glycero-2,3-cyclic phosphate + ethanolamine. In terms of biological role, dermonecrotic toxins cleave the phosphodiester linkage between the phosphate and headgroup of certain phospholipids (sphingolipid and lysolipid substrates), forming an alcohol (often choline) and a cyclic phosphate. This toxin acts on sphingomyelin (SM). It may also act on ceramide phosphoethanolamine (CPE), lysophosphatidylcholine (LPC) and lysophosphatidylethanolamine (LPE), but not on lysophosphatidylserine (LPS), and lysophosphatidylglycerol (LPG). It acts by transphosphatidylation, releasing exclusively cyclic phosphate products as second products. Induces dermonecrosis, hemolysis, increased vascular permeability, edema, inflammatory response, and platelet aggregation. The polypeptide is Dermonecrotic toxin LspaSicTox-alphaIA1ii (Loxosceles spadicea (Recluse spider)).